Reading from the N-terminus, the 390-residue chain is Flap endonuclease 1 (390 aa).

Residues 1-111 (MGIKGLAKLL…GELLKRREKR (111 aa)) form an N-domain region. Asp-34 provides a ligand contact to Mg(2+). DNA-binding residues include Arg-47 and Arg-77. 5 residues coordinate Mg(2+): Asp-93, Glu-165, Glu-167, Asp-186, and Asp-188. The segment at 129 to 260 (EQDKQSKRLV…KTALKLIREH (132 aa)) is I-domain. Glu-165 is a DNA binding site. Positions 238 and 240 each coordinate DNA. Asp-240 contacts Mg(2+). Residues 342 to 390 (KPQSRMDSFFKVKANPEGDKKKAEKRKAELAASRGKGKKGKGGGGFKKK) are disordered. The segment at 343 to 351 (PQSRMDSFF) is interaction with PCNA. A compositionally biased stretch (basic and acidic residues) spans 349–370 (SFFKVKANPEGDKKKAEKRKAE). Residues 376-390 (GKGKKGKGGGGFKKK) are compositionally biased toward basic residues.

It belongs to the XPG/RAD2 endonuclease family. FEN1 subfamily. In terms of assembly, interacts with PCNA. Three molecules of FEN1 bind to one PCNA trimer with each molecule binding to one PCNA monomer. PCNA stimulates the nuclease activity without altering cleavage specificity. The cofactor is Mg(2+). Post-translationally, phosphorylated. Phosphorylation upon DNA damage induces relocalization to the nuclear plasma.

The protein resides in the nucleus. It is found in the nucleolus. Its subcellular location is the nucleoplasm. It localises to the mitochondrion. In terms of biological role, structure-specific nuclease with 5'-flap endonuclease and 5'-3' exonuclease activities involved in DNA replication and repair. During DNA replication, cleaves the 5'-overhanging flap structure that is generated by displacement synthesis when DNA polymerase encounters the 5'-end of a downstream Okazaki fragment. It enters the flap from the 5'-end and then tracks to cleave the flap base, leaving a nick for ligation. Also involved in the long patch base excision repair (LP-BER) pathway, by cleaving within the apurinic/apyrimidinic (AP) site-terminated flap. Acts as a genome stabilization factor that prevents flaps from equilibrating into structures that lead to duplications and deletions. Also possesses 5'-3' exonuclease activity on nicked or gapped double-stranded DNA, and exhibits RNase H activity. Also involved in replication and repair of rDNA and in repairing mitochondrial DNA. The chain is Flap endonuclease 1 from Thalassiosira pseudonana (Marine diatom).